A 1451-amino-acid chain; its full sequence is Copper-transporting ATPase 2 (1451 aa).

At 1 to 646 (MPEQERKVTA…KTEIKQWKKS (646 aa)) the chain is on the cytoplasmic side. 3 consecutive HMA domains span residues 57 to 123 (TTGV…FEAS), 142 to 208 (AVVK…FEAA), and 256 to 322 (ATLP…PGYF). Residues C68, C71, C153, C156, C267, and C270 each contribute to the Cu(+) site. Residues 328 to 353 (DGLEKESGSSSVPSLGSSQRQQEPGP) are disordered. The span at 335-345 (GSSSVPSLGSS) shows a compositional bias: low complexity. One can recognise an HMA 4 domain in the interval 355–421 (RTAVLTITGI…AVEDMGFEVS (67 aa)). 3 positions are modified to phosphoserine: S469, S471, and S474. HMA domains lie at 481-547 (QKCF…FEAA) and 557-623 (GDIE…FHAS). Cu(+) is bound by residues C492, C495, C568, and C571. The helical transmembrane segment at 647–668 (FLCSLVFGIPVMGLMIYMLIPS) threads the bilayer. At 669-690 (SKPHETMVLDHNIIPGLSVLNL) the chain is on the extracellular side. The chain crosses the membrane as a helical span at residues 691-710 (IFFILCTFVQFLGGWYFYVQ). Over 711-717 (AYKSLRH) the chain is Cytoplasmic. Residues 718–738 (KSANMDVLIVLATTIAYAYSL) traverse the membrane as a helical segment. Residues 739-757 (VILVVAIAEKAEKSPVTFF) lie on the Extracellular side of the membrane. The chain crosses the membrane as a helical span at residues 758-778 (DTPPMLFVFIALGRWLEHVAK). Topologically, residues 779–912 (SKTSEALAKL…KAPIQQLADR (134 aa)) are cytoplasmic. The helical transmembrane segment at 913–935 (FSGYFVPFIIIISTLTLVVWIII) threads the bilayer. Residues 936-965 (GFVDFGIVQKYFPSPSKHISQTEVIIRFAF) are Extracellular-facing. Residues 966–987 (QTSITVLCIACPCSLGLATPTA) traverse the membrane as a helical segment. At 988-1310 (VMVGTGVAAQ…LSKRTVRRIR (323 aa)) the chain is on the cytoplasmic side. D1020 (4-aspartylphosphate intermediate) is an active-site residue. Mg(2+)-binding residues include D1255 and D1259. Residues 1311 to 1328 (VNLVLALIYNMVGIPIAA) traverse the membrane as a helical segment. The Extracellular portion of the chain corresponds to 1329–1339 (GVFMPIGIVLQ). The chain crosses the membrane as a helical span at residues 1340-1357 (PWMGSAAASSVSVVLSSL). The Cytoplasmic segment spans residues 1358-1451 (QLKCYRKPDL…LSDRDEEQCI (94 aa)). Residues S1384 and S1443 each carry the phosphoserine modification.

Belongs to the cation transport ATPase (P-type) (TC 3.A.3) family. Type IB subfamily. As to quaternary structure, monomer. Interacts with COMMD1/MURR1. Interacts with DCTN4, in a copper-dependent manner. Interacts with ATOX1. Interacts (via C-terminus) with ZBTB16/PLZF. In terms of tissue distribution, expressed in brain, liver, kidney, spleen and stomach. In brain, detected in neuronal cells of the hippocampal formation, olfactory bulbs, cerebellum, cerebral cortex and nuclei in the brainstem. Isoform PINA is expressed during night in adult pineal gland (pinealocytes) and retina. Isoform PINA is not detected in other tissue.

Its subcellular location is the golgi apparatus. It is found in the trans-Golgi network membrane. The protein resides in the late endosome. It catalyses the reaction Cu(+)(in) + ATP + H2O = Cu(+)(out) + ADP + phosphate + H(+). Functionally, copper ion transmembrane transporter involved in the export of copper out of the cells, such as the efflux of hepatic copper into the bile. The chain is Copper-transporting ATPase 2 (Atp7b) from Rattus norvegicus (Rat).